Reading from the N-terminus, the 352-residue chain is Isoflavone-7-O-methyltransferase 6 (352 aa).

118–127 (VLDPTLSGSY) contributes to the substrate binding site. S-adenosyl-L-methionine-binding residues include glycine 196, aspartate 219, aspartate 239, methionine 240, and lysine 253. The active-site Proton acceptor is the histidine 257.

Belongs to the class I-like SAM-binding methyltransferase superfamily. Cation-independent O-methyltransferase family. COMT subfamily. As to quaternary structure, homodimer.

It catalyses the reaction a 7-hydroxyisoflavone + S-adenosyl-L-methionine = a 7-methoxyisoflavone + S-adenosyl-L-homocysteine + H(+). The protein operates within phytoalexin biosynthesis; medicarpin biosynthesis. Functionally, transfers a methyl group to 7-hydroxyls of the isoflavones daidzein, genistein and 6,7,4'-trihydroxyisoflavone. Can also methylate (+)6a-hydroxymaackiain with lower efficiency. The sequence is that of Isoflavone-7-O-methyltransferase 6 from Medicago sativa (Alfalfa).